Reading from the N-terminus, the 603-residue chain is Sulfoacetaldehyde acetyltransferase (603 aa).

This sequence belongs to the TPP enzyme family. In terms of assembly, homodimer or homotetramer. It depends on Mg(2+) as a cofactor. Thiamine diphosphate is required as a cofactor.

It is found in the cytoplasm. It carries out the reaction acetyl phosphate + sulfite + H(+) = sulfoacetaldehyde + phosphate. Its pathway is organosulfur degradation; taurine degradation via aerobic pathway; acetyl phosphate and sulfite from taurine: step 2/2. The polypeptide is Sulfoacetaldehyde acetyltransferase (xsc) (Alcaligenes xylosoxydans xylosoxydans (Achromobacter xylosoxidans)).